Here is a 182-residue protein sequence, read N- to C-terminus: Trypsin inhibitor 2 (182 aa).

A Pyrrolidone carboxylic acid modification is found at glutamine 1. Intrachain disulfides connect cysteine 40–cysteine 84 and cysteine 136–cysteine 147.

The protein belongs to the protease inhibitor I3 (leguminous Kunitz-type inhibitor) family.

This chain is Trypsin inhibitor 2, found in Psophocarpus tetragonolobus (Winged bean).